The sequence spans 434 residues: Alpha-enolase (434 aa).

Ser-2 carries the N-acetylserine modification. At Lys-5 the chain carries N6-acetyllysine. Phosphoserine is present on Ser-27. Ser-40 is a binding site for Mg(2+). At Tyr-44 the chain carries Phosphotyrosine. N6-acetyllysine; alternate is present on Lys-60. Position 60 is an N6-succinyllysine; alternate (Lys-60). An N6-acetyllysine mark is found at Lys-64 and Lys-71. Lys-89 is subject to N6-acetyllysine; alternate. N6-succinyllysine; alternate is present on Lys-89. N6-acetyllysine occurs at positions 92 and 126. Residues His-158 and Glu-167 each coordinate substrate. N6-acetyllysine is present on residues Lys-193 and Lys-199. Lys-202 carries the post-translational modification N6-acetyllysine; alternate. Lys-202 participates in a covalent cross-link: Glycyl lysine isopeptide (Lys-Gly) (interchain with G-Cter in SUMO2); alternate. The active-site Proton donor is Glu-210. 2 positions are modified to N6-acetyllysine; alternate: Lys-228 and Lys-233. An N6-succinyllysine; alternate modification is found at Lys-228. N6-(2-hydroxyisobutyryl)lysine; alternate is present on Lys-228. The residue at position 233 (Lys-233) is an N6-malonyllysine; alternate. Residue Asp-245 participates in Mg(2+) binding. Ser-254 bears the Phosphoserine mark. Lys-256 is subject to N6-acetyllysine. Ser-263 and Ser-272 each carry phosphoserine. Residue Lys-281 is modified to N6-acetyllysine; alternate. Lys-281 is modified (N6-(2-hydroxyisobutyryl)lysine; alternate). Lys-285 carries the N6-acetyllysine modification. Phosphotyrosine is present on Tyr-287. Ser-291 carries the post-translational modification Phosphoserine. Residues Glu-293 and Asp-318 each contribute to the Mg(2+) site. Residues Glu-293 and Asp-318 each coordinate substrate. 2 positions are modified to N6-acetyllysine: Lys-335 and Lys-343. Lys-343 serves as the catalytic Proton acceptor. Residues Ser-370–Ser-373 and Lys-394 contribute to the substrate site. The tract at residues Ala-405 to Lys-434 is required for interaction with PLG. An N6-acetyllysine modification is found at Lys-406. Lys-420 is modified (N6-acetyllysine; alternate). An N6-succinyllysine; alternate modification is found at Lys-420. An N6-malonyllysine; alternate modification is found at Lys-420.

It belongs to the enolase family. Mammalian enolase is composed of 3 isozyme subunits, alpha, beta and gamma, which can form homodimers or heterodimers which are cell-type and development-specific. ENO1 interacts with PLG in the neuronal plasma membrane and promotes its activation. The C-terminal lysine is required for this binding. Interacts with ENO4 and PGAM2. Interacts with CMTM6. Requires Mg(2+) as cofactor. ISGylated. In terms of processing, lysine 2-hydroxyisobutyrylation (Khib) by p300/EP300 activates the phosphopyruvate hydratase activity.

The protein localises to the cytoplasm. Its subcellular location is the cell membrane. The catalysed reaction is (2R)-2-phosphoglycerate = phosphoenolpyruvate + H2O. It participates in carbohydrate degradation; glycolysis; pyruvate from D-glyceraldehyde 3-phosphate: step 4/5. Glycolytic enzyme the catalyzes the conversion of 2-phosphoglycerate to phosphoenolpyruvate. In addition to glycolysis, involved in various processes such as growth control, hypoxia tolerance and allergic responses. May also function in the intravascular and pericellular fibrinolytic system due to its ability to serve as a receptor and activator of plasminogen on the cell surface of several cell-types such as leukocytes and neurons. Stimulates immunoglobulin production. The polypeptide is Alpha-enolase (ENO1) (Pongo abelii (Sumatran orangutan)).